A 314-amino-acid polypeptide reads, in one-letter code: Short-chain dehydrogenase/reductase drtF (314 aa).

V26, K50, D73, N100, Y185, and K189 together coordinate NADP(+). Y185 acts as the Proton acceptor in catalysis. The active-site Lowers pKa of active site Tyr is K189.

This sequence belongs to the short-chain dehydrogenases/reductases (SDR) family.

Its pathway is secondary metabolite biosynthesis; terpenoid biosynthesis. In terms of biological role, short-chain dehydrogenase/reductase; part of the gene cluster that mediates the biosynthesis of various drimane-type sesquiterpene esters, compounds that exhibit diverse biological activities and are widely present in eukaryotes. The pathway begins with the synthesis of the backbone drimenol by the terpene cyclase drtB using farnesyl pyrophosphate (FPP) as substrate. The cytochrome P450 monooxygenase drtD is then responsible for the hydroxylations at C-6, C-9 and C-12, as well as the oxidation of hydroxyl groups at C-6 and C-11 to a ketone and an aldehyde, respectively. Then, the biosynthesis can go in two directions, either the hydroxylated drimenol is further hydroxylated at C-2 and C-3 by an enzyme(s) not associated with the drt cluster, or the FAD-binding oxidoreductase drtC further oxidizes C-11 or C-12 to form the butyrolactone ring. DrtB, drtD and drtC are solely responsible for the formation of the different drimane structures observed during drimane sesquiterpenes biosynthesis. The polyketide synthase drtA synthesizes different lengths (C6 and C8) of PKS chains, which are then oxidized to varying degrees by the short-chain dehydrogenase drtF. Finally, these PKS chains are transferred onto drimane sesquiterpenes by the acyltransferase drtE, forming the sesquiterpene esters. In addition to the different fatty acyl-CoA chains produced by drtA, drtE is also able to use cinnamoyl-CoA as a substrate. In Aspergillus calidoustus, this protein is Short-chain dehydrogenase/reductase drtF.